A 603-amino-acid chain; its full sequence is DNA mismatch repair protein MutL (603 aa).

Residues 336–346 (EVSKKQKEQQK) are compositionally biased toward basic and acidic residues. Positions 336–372 (EVSKKQKEQQKSEQIQMSFEENRQPKEPPTLFSKPNI) are disordered.

This sequence belongs to the DNA mismatch repair MutL/HexB family.

This protein is involved in the repair of mismatches in DNA. It is required for dam-dependent methyl-directed DNA mismatch repair. May act as a 'molecular matchmaker', a protein that promotes the formation of a stable complex between two or more DNA-binding proteins in an ATP-dependent manner without itself being part of a final effector complex. The protein is DNA mismatch repair protein MutL of Listeria innocua serovar 6a (strain ATCC BAA-680 / CLIP 11262).